A 670-amino-acid polypeptide reads, in one-letter code: Acetyl-coenzyme A synthetase (670 aa).

CoA-binding positions include 211–214 (RGGK) and threonine 329. Residues 404 to 406 (GEP), 428 to 433 (DTYWQT), aspartate 519, and arginine 534 each bind ATP. Serine 542 lines the CoA pocket. Arginine 545 provides a ligand contact to ATP. Arginine 603 contacts CoA.

The protein belongs to the ATP-dependent AMP-binding enzyme family.

It carries out the reaction acetate + ATP + CoA = acetyl-CoA + AMP + diphosphate. The polypeptide is Acetyl-coenzyme A synthetase (facA) (Emericella nidulans (strain FGSC A4 / ATCC 38163 / CBS 112.46 / NRRL 194 / M139) (Aspergillus nidulans)).